A 155-amino-acid chain; its full sequence is SsrA-binding protein (155 aa).

The protein belongs to the SmpB family.

It localises to the cytoplasm. Required for rescue of stalled ribosomes mediated by trans-translation. Binds to transfer-messenger RNA (tmRNA), required for stable association of tmRNA with ribosomes. tmRNA and SmpB together mimic tRNA shape, replacing the anticodon stem-loop with SmpB. tmRNA is encoded by the ssrA gene; the 2 termini fold to resemble tRNA(Ala) and it encodes a 'tag peptide', a short internal open reading frame. During trans-translation Ala-aminoacylated tmRNA acts like a tRNA, entering the A-site of stalled ribosomes, displacing the stalled mRNA. The ribosome then switches to translate the ORF on the tmRNA; the nascent peptide is terminated with the 'tag peptide' encoded by the tmRNA and targeted for degradation. The ribosome is freed to recommence translation, which seems to be the essential function of trans-translation. The polypeptide is SsrA-binding protein (Gloeothece citriformis (strain PCC 7424) (Cyanothece sp. (strain PCC 7424))).